Here is a 310-residue protein sequence, read N- to C-terminus: Ribonuclease HIII (310 aa).

Positions 90–306 constitute an RNase H type-2 domain; it reads FQCIGSDEAG…RKKAENLVQK (217 aa). A divalent metal cation is bound by residues D96, E97, and D201.

Belongs to the RNase HII family. RnhC subfamily. Mn(2+) is required as a cofactor. Mg(2+) serves as cofactor.

The protein resides in the cytoplasm. It catalyses the reaction Endonucleolytic cleavage to 5'-phosphomonoester.. Endonuclease that specifically degrades the RNA of RNA-DNA hybrids. The protein is Ribonuclease HIII of Staphylococcus saprophyticus subsp. saprophyticus (strain ATCC 15305 / DSM 20229 / NCIMB 8711 / NCTC 7292 / S-41).